The following is a 300-amino-acid chain: Fluorinase (300 aa).

S-adenosyl-L-methionine-binding positions include aspartate 16, 21-23 (DDS), tyrosine 77, serine 158, aspartate 211, asparagine 216, 270-271 (SR), and 278-280 (RNA).

This sequence belongs to the SAM hydrolase / SAM-dependent halogenase family. In terms of assembly, homohexamer.

It carries out the reaction fluoride + S-adenosyl-L-methionine = 5'-deoxy-5'-fluoroadenosine + L-methionine. The enzyme catalyses chloride + S-adenosyl-L-methionine = 5'-chloro-5'-deoxyadenosine + L-methionine. With respect to regulation, activity is severely inhibited by 1 mM Cu(2+) or Zn(2+). Functionally, catalyzes the formation of a C-F bond by combining S-adenosyl-L-methionine (SAM) and fluoride to generate 5'-fluoro-5'-deoxyadenosine (5'-FDA) and L-methionine. Probably involved in fluoroacetate (FAc) and 4-fluorothreonine (4-FT) biosynthesis. In vitro, can also catalyze the conversion of chloride and SAM to 5'-chloro-5'-deoxyadenosine (5'-CIDA) and L-methionine in the presence of L-amino acid oxidase. This Nocardia brasiliensis (strain ATCC 700358 / HUJEG-1) protein is Fluorinase.